The sequence spans 3420 residues: Adhesin BmaC autotransporter (3420 aa).

Positions 1–72 (MPNLANQDFT…SLVMAGTAAA (72 aa)) are cleaved as a signal peptide. Residues 3138–3420 (GPSGNNGIWA…AGSVGLRVRW (283 aa)) enclose the Autotransporter domain.

Its subcellular location is the cell surface. The protein resides in the cell outer membrane. Its function is as follows. Fibronectin-binding protein, which is involved in adhesion to host cells and in the infective process. Mediates the binding of B.suis to the extracellular matrix and to non-phagocytic cells via cell-associated fibronectin. The sequence is that of Adhesin BmaC autotransporter from Brucella suis biovar 1 (strain 1330).